The sequence spans 100 residues: Urease subunit gamma (100 aa).

Belongs to the urease gamma subunit family. Heterotrimer of UreA (gamma), UreB (beta) and UreC (alpha) subunits. Three heterotrimers associate to form the active enzyme.

The protein localises to the cytoplasm. The catalysed reaction is urea + 2 H2O + H(+) = hydrogencarbonate + 2 NH4(+). It functions in the pathway nitrogen metabolism; urea degradation; CO(2) and NH(3) from urea (urease route): step 1/1. This Mycobacterium bovis (strain ATCC BAA-935 / AF2122/97) protein is Urease subunit gamma.